A 210-amino-acid polypeptide reads, in one-letter code: Large ribosomal subunit protein bL25 (210 aa).

Residues 179–210 (LPPQQEEEIHSGEQQEPGHPDAEEGRETTPES) are disordered. Residues 185–210 (EEIHSGEQQEPGHPDAEEGRETTPES) show a composition bias toward basic and acidic residues.

Belongs to the bacterial ribosomal protein bL25 family. CTC subfamily. In terms of assembly, part of the 50S ribosomal subunit; part of the 5S rRNA/L5/L18/L25 subcomplex. Contacts the 5S rRNA. Binds to the 5S rRNA independently of L5 and L18.

Its function is as follows. This is one of the proteins that binds to the 5S RNA in the ribosome where it forms part of the central protuberance. This is Large ribosomal subunit protein bL25 from Geobacillus sp. (strain WCH70).